A 646-amino-acid chain; its full sequence is Chaperone protein DnaK (646 aa).

Residue T197 is modified to Phosphothreonine; by autocatalysis. A disordered region spans residues 599 to 646; sequence QQGAQAGADPNAGSSQGAQAGTDYGTSGPKTGTADDVDYEVVNDDNDK. A compositionally biased stretch (polar residues) spans 610 to 628; the sequence is AGSSQGAQAGTDYGTSGPK. The span at 633 to 646 shows a compositional bias: acidic residues; it reads DDVDYEVVNDDNDK.

Belongs to the heat shock protein 70 family.

Its function is as follows. Acts as a chaperone. This chain is Chaperone protein DnaK, found in Treponema denticola (strain ATCC 35405 / DSM 14222 / CIP 103919 / JCM 8153 / KCTC 15104).